Consider the following 144-residue polypeptide: INO80 complex subunit 5 (144 aa).

The interval 1–58 is disordered; it reads MAAQKKQGERVLPARSTRKRRQLPDMLYYDERTDSYVTPQERSLSEANAQTRPAPNTI. The segment covering 35–58 has biased composition (polar residues); sequence SYVTPQERSLSEANAQTRPAPNTI.

Component of the INO80 chromatin remodeling complex.

Its subcellular location is the nucleus. Component of the INO80 complex which remodels chromatin by shifting nucleosomes and is involved in DNA repair. The protein is INO80 complex subunit 5 (iec5) of Schizosaccharomyces pombe (strain 972 / ATCC 24843) (Fission yeast).